Consider the following 708-residue polypeptide: Matrix metalloproteinase-9 (708 aa).

An N-terminal signal peptide occupies residues 1 to 19 (MSPWQPLLLVLLALGYSFA). Positions 20–107 (APHQRQPTYV…PRCGVPDVGK (88 aa)) are cleaved as a propeptide — activation peptide. N-linked (GlcNAc...) asparagine glycosylation occurs at Asn-39. The Cysteine switch signature appears at 98–105 (PRCGVPDV). Zn(2+) is bound at residue Cys-100. An N-linked (GlcNAc...) asparagine glycan is attached at Asn-121. Positions 132 and 166 each coordinate Ca(2+). Zn(2+)-binding residues include His-176 and Asp-178. Ca(2+) contacts are provided by Asp-183, Gly-184, Asp-186, and Leu-188. His-191 serves as a coordination point for Zn(2+). Ca(2+) is bound by residues Gly-198, Gln-200, and Asp-202. Residue His-204 coordinates Zn(2+). The Ca(2+) site is built by Asp-206, Asp-207, and Glu-209. Fibronectin type-II domains follow at residues 226–274 (ANGA…FCPS), 284–332 (GDGK…FCPT), and 343–391 (SAGE…FCPD). 6 disulfides stabilise this stretch: Cys-231–Cys-257, Cys-245–Cys-272, Cys-289–Cys-315, Cys-303–Cys-330, Cys-348–Cys-374, and Cys-362–Cys-389. Zn(2+) is bound at residue His-402. The active site involves Glu-403. Zn(2+) is bound by residues His-406 and His-412. Positions 441 to 520 (HHLYGRGSKP…SSTPDDNPCN (80 aa)) are disordered. Low complexity predominate over residues 480-490 (PTGGPTVAPTG). A compositionally biased stretch (pro residues) spans 491 to 502 (APSPGPTGPPTA). A disulfide bridge links Cys-519 with Cys-707. 4 Hemopexin repeats span residues 521–566 (VDVF…WPAF), 567–611 (PSKL…GLGS), 613–660 (VTLV…FSGV), and 661–707 (PWNS…LLQC).

Belongs to the peptidase M10A family. In terms of assembly, exists as monomer or homodimer; disulfide-linked. Also exists as heterodimer with LCN2. Macrophages and transformed cell lines produce only the monomeric form. Interacts with ECM1. It depends on Zn(2+) as a cofactor. The cofactor is Ca(2+). N- and O-glycosylated.

The protein localises to the secreted. It localises to the extracellular space. It is found in the extracellular matrix. The enzyme catalyses Cleavage of gelatin types I and V and collagen types IV and V.. Its function is as follows. Matrix metalloproteinase that plays an essential role in local proteolysis of the extracellular matrix and in leukocyte migration. Could play a role in bone osteoclastic resorption. Cleaves KiSS1 at a Gly-|-Leu bond. Cleaves NINJ1 to generate the Secreted ninjurin-1 form. Cleaves type IV and type V collagen into large C-terminal three quarter fragments and shorter N-terminal one quarter fragments. Degrades fibronectin but not laminin or Pz-peptide. The protein is Matrix metalloproteinase-9 (Mmp9) of Rattus norvegicus (Rat).